The chain runs to 304 residues: UDP-N-acetylenolpyruvoylglucosamine reductase (304 aa).

An FAD-binding PCMH-type domain is found at 33–198 (IGGPADLLVM…LEVVLALQEG (166 aa)). The active site involves Arg177. Catalysis depends on Ser227, which acts as the Proton donor. Glu297 is an active-site residue.

The protein belongs to the MurB family. FAD is required as a cofactor.

It is found in the cytoplasm. The catalysed reaction is UDP-N-acetyl-alpha-D-muramate + NADP(+) = UDP-N-acetyl-3-O-(1-carboxyvinyl)-alpha-D-glucosamine + NADPH + H(+). It participates in cell wall biogenesis; peptidoglycan biosynthesis. Its function is as follows. Cell wall formation. The protein is UDP-N-acetylenolpyruvoylglucosamine reductase of Alkaliphilus metalliredigens (strain QYMF).